Reading from the N-terminus, the 163-residue chain is Endoribonuclease YbeY (163 aa).

Positions 116, 120, and 126 each coordinate Zn(2+).

Belongs to the endoribonuclease YbeY family. Zn(2+) serves as cofactor.

The protein resides in the cytoplasm. Functionally, single strand-specific metallo-endoribonuclease involved in late-stage 70S ribosome quality control and in maturation of the 3' terminus of the 16S rRNA. This Idiomarina loihiensis (strain ATCC BAA-735 / DSM 15497 / L2-TR) protein is Endoribonuclease YbeY.